The sequence spans 152 residues: MENRVADELIHLPLPEVQAVNVINVRHGDGDGDGENGWERHLDDEQMQAMRLENPQVAMLLDAPHEPPIELHHMLEPVNVPERPRKKRSFLTISKPFHVQPERCALISNGWRAVQCVQPEKRGECFANYLIKHMNSRNYPNGEGLPKRWGQY.

The protein belongs to the male-specific scotti family.

Its function is as follows. Post-meiotically transcribed gene that has a role in late spermiogenesis; required for actin cone progression during spermatid individualization. The polypeptide is Male-specific protein scotti (Drosophila mojavensis (Fruit fly)).